Here is a 395-residue protein sequence, read N- to C-terminus: Protein PIN-LIKES 7 (395 aa).

The Lumenal portion of the chain corresponds to 1–8 (MGFLELLE). The chain crosses the membrane as a helical span at residues 9–29 (VASMPIVQVLLISVLGAFLAT). The Cytoplasmic segment spans residues 30-45 (DYCSLLSADTRRSVNK). A helical membrane pass occupies residues 46-66 (LVFVVFTPCIMFANLAETVTL). Residues 67-73 (QDIISWW) are Lumenal-facing. The helical transmembrane segment at 74–94 (FMPINVGITFLVGGILGWLVV) threads the bilayer. At 95 to 106 (KLLNPKPQLHGL) the chain is on the cytoplasmic side. Residues 107-127 (IIATCASGNMGNLMLILVPAI) traverse the membrane as a helical segment. The Lumenal portion of the chain corresponds to 128-142 (CDEEGSPFGNRSVCR). The chain crosses the membrane as a helical span at residues 143–163 (SIGLSYASFSMALGGFYIWTY). Topologically, residues 164–232 (SYQLVRSSAT…KDLLHQILEE (69 aa)) are cytoplasmic. A helical transmembrane segment spans residues 233–253 (LFAPPTIGAILGFVFGATNWL). Residues 254 to 272 (RNLIIGENAPLRVIQDSVK) are Lumenal-facing. The helical transmembrane segment at 273 to 293 (LLGEGTIPCITLILGGNLIQG) threads the bilayer. Residues 294–302 (LRSSAVKKS) lie on the Cytoplasmic side of the membrane. Residues 303-323 (VIVGVIIVRYILLPVVGVGVV) form a helical membrane-spanning segment. Residues 324–340 (QLAGNLGYLPPDPLFRY) are Lumenal-facing. A helical membrane pass occupies residues 341–361 (VLMLQFALPPAMNISTMAQLF). Residues 362 to 369 (DVAQDECS) are Cytoplasmic-facing. The helical transmembrane segment at 370–390 (VIFLWTYLVASLALTVWSTIF) threads the bilayer. Residues 391–395 (LSILS) are Lumenal-facing.

This sequence belongs to the auxin efflux carrier (TC 2.A.69.2) family. In terms of tissue distribution, expressed in seedlings, rosette and cauline leaves, stems and flowers.

The protein resides in the endoplasmic reticulum membrane. In terms of biological role, involved in cellular auxin homeostasis by regulating auxin metabolism. Regulates intracellular auxin accumulation at the endoplasmic reticulum and thus auxin availability for nuclear auxin signaling. In Arabidopsis thaliana (Mouse-ear cress), this protein is Protein PIN-LIKES 7.